Consider the following 410-residue polypeptide: MLSPVEVDLEAYDISRVSGFLPDKCPLRKLPDPYYVPWERLTAHLEPLIRAKRLQHELDQMPVLGITRLTSQPMRRRAYVLLSFLAQAYLWGEDIPNTTLPQAIAKPLTEVSTLLEIKPFATFAAFCLWSFSVHFDDDIGGDCHKFLDNMSMTCSFTGTTDEAWFFNVSTAIEARGGRIIPSILNAISAVQNNDMLTVEGFLLDFTICLRDLCDLIDRMHENCRPSVFYHRIRPFLSGTSNNNPATENSKGVFYVQAEDGTGEWHRYSGGSNAQSSLIQLFDITLGINHDIGYKTRYLREMRSYMPAQHRRFLARMEEISNLRPYALSHGPGSSNMCSLYNSAVLGLKNLRDKHMALVFRYIIIPRAKEKAGNGLAIRQKDLVGTGGTDMIPFLRETRDDTMNAVHLPYS.

A heme-binding site is contributed by H309.

Belongs to the indoleamine 2,3-dioxygenase family. The cofactor is heme.

The catalysed reaction is D-tryptophan + O2 = N-formyl-D-kynurenine. It catalyses the reaction L-tryptophan + O2 = N-formyl-L-kynurenine. It participates in secondary metabolite biosynthesis. Indoleamine 2,3-dioxygenase; part of the gene cluster that mediates the biosynthesis of the benzazepine alkaloid nanangelenin A which contains an unprecedented 3,4-dihydro-1-benzazepine-2,5-dione-N-prenyl-N-acetoxy-anthranilamide scaffold. The first step of nanangelenin biosynthesis is catalyzed by the indoleamine 2,3-dioxygenase nanC which produces N-formyl-kynurenine through the catabolism of tryptophan. The two-module NRPS nanA then utilizes anthranilate (Ant) and L-kynurenine (L-Kyn) to assemble the dipeptide product nanangelenin B. The first adenylation domain of nanA (A1) loads anthranilate onto the T1 domain, while A2 loads kynurenine, generated through spontaneous nonenzymatic deformylation of the nanC-supplied N-formyl-kynurenine. The peptide bond formation between the tethered amino acids is catalyzed by the first condensation domain (C1) between anthranilate's carbonyl carbon and kynurenine's aliphatic primary amine. The second C domain (C2) catalyzes the final cyclization event between the aromatic amine of kynurenine and the tethered carbonyl carbon, yielding nanangelenin B. The terminal T3 domain enhances the catalytic efficiency of C2, suggesting the T2-tethered Ant-L-Kyn is transferred to T3 prior to cyclization by C2. Once released from nanA, nanangelenin B is then prenylated by the prenyltransferase nanD to form nanangelenin C. Nanangelenin C is then N-hydroxylated by the FAD-dependent monooxygenase nanF and further acetylated by the acetyltransferase nanB to yield nanangelenin F. Finally, the N-methyltransferase nanE methylates the amide nitrogen of 1-benzazepine to convert nanangelenin F into nanangelenin A. NanE is also able to methylate most of the intermediates of the pathway such as nanangelenin B and nanangelenin C to produce nanangelenin D and nanangelenin E, respectively. The protein is Indoleamine 2,3-dioxygenase nanC of Aspergillus nanangensis.